The primary structure comprises 393 residues: Formate-dependent phosphoribosylglycinamide formyltransferase (393 aa).

N(1)-(5-phospho-beta-D-ribosyl)glycinamide is bound by residues Glu22–Leu23 and Glu82. ATP-binding positions include Arg114, Lys155, Ser160–Gln165, Glu195–Val198, and Glu203. Residues Arg119–Leu308 enclose the ATP-grasp domain. Mg(2+)-binding residues include Glu267 and Glu279. Residues Asp286, Lys356, and Arg363–Arg364 each bind N(1)-(5-phospho-beta-D-ribosyl)glycinamide.

This sequence belongs to the PurK/PurT family. Homodimer.

The catalysed reaction is N(1)-(5-phospho-beta-D-ribosyl)glycinamide + formate + ATP = N(2)-formyl-N(1)-(5-phospho-beta-D-ribosyl)glycinamide + ADP + phosphate + H(+). Its pathway is purine metabolism; IMP biosynthesis via de novo pathway; N(2)-formyl-N(1)-(5-phospho-D-ribosyl)glycinamide from N(1)-(5-phospho-D-ribosyl)glycinamide (formate route): step 1/1. Involved in the de novo purine biosynthesis. Catalyzes the transfer of formate to 5-phospho-ribosyl-glycinamide (GAR), producing 5-phospho-ribosyl-N-formylglycinamide (FGAR). Formate is provided by PurU via hydrolysis of 10-formyl-tetrahydrofolate. In Histophilus somni (strain 129Pt) (Haemophilus somnus), this protein is Formate-dependent phosphoribosylglycinamide formyltransferase.